The chain runs to 462 residues: Cysteine desulfurase, mitochondrial (462 aa).

Residues 132-133, asparagine 212, glutamine 240, and 260-262 contribute to the pyridoxal 5'-phosphate site; these read AT and SGH. Position 263 is an N6-(pyridoxal phosphate)lysine (lysine 263). Position 300 (threonine 300) interacts with pyridoxal 5'-phosphate. Cysteine 386 acts as the Cysteine persulfide intermediate in catalysis. [2Fe-2S] cluster is bound at residue cysteine 386.

The protein belongs to the class-V pyridoxal-phosphate-dependent aminotransferase family. NifS/IscS subfamily. In terms of assembly, component of the mitochondrial core iron-sulfur cluster (ISC) assembly complex at least composed of the cystein desulfurase Nfs1, the scaffold protein IscU, the accessory protein bcn92/Isd11/Lyrm4, and probably fh/frataxin. Interacts with bcn92/Isd11/Lyrm4 and IscU. Pyridoxal 5'-phosphate serves as cofactor. In terms of tissue distribution, ubiquitous expression at high levels in any life stage.

The protein localises to the mitochondrion. The protein resides in the nucleus. The enzyme catalyses (sulfur carrier)-H + L-cysteine = (sulfur carrier)-SH + L-alanine. With respect to regulation, active when in complex with bcn92/Isd11/Lyrm4. L-cysteine binding kinetics are reduced in the presence of bcn92/Isd11/Lyrm4 and IscU. Activity is regulated by other components of the mitochondrial core iron-sulfur cluster (ISC) complex; Activity is reduced in the presence of IscU but enhanced when both IscU and fh/frataxin are present. In terms of biological role, catalyzes the removal of elemental sulfur from cysteine to produce alanine. It supplies the inorganic sulfur for iron-sulfur (Fe-S) clusters. The sequence is that of Cysteine desulfurase, mitochondrial from Drosophila melanogaster (Fruit fly).